The primary structure comprises 180 residues: UPF0690 protein C1orf52 homolog (180 aa).

Disordered stretches follow at residues 1–66 and 96–180; these read MAAE…SVTR and KIWK…KKKK. Basic and acidic residues predominate over residues 48-61; the sequence is KQAEKRLPGPDELF. Position 65 is a phosphothreonine (T65). Y130 is modified (phosphotyrosine). The span at 149–160 shows a compositional bias: acidic residues; the sequence is EGEETVESDDDK. S156 bears the Phosphoserine mark. The span at 161-180 shows a compositional bias: basic and acidic residues; that stretch reads DERASKIRRVEPGEAAKKKK.

Belongs to the UPF0690 family.

The protein is UPF0690 protein C1orf52 homolog of Mus musculus (Mouse).